A 445-amino-acid chain; its full sequence is MQTLNKKVAVVTLGCPKNQVDSEIMTGHMMTKYQIVNEPEQADIIIINTCTFIESAKAESIDMILQMSQYKEEGQCQTLVATGCLAQRYGDELLAEIPELDGIMGTGNVAEILETLEEAEKSKVRRISAEAPAFIYDETMPRVRLSPKQYAYVKVAEGCDNYCTYCIIPHVRGHFRSRTQESILREVEAMASEGVKEVLLIAQDTTRYGKDRYGEYRLPSLIKEIARIEGIEWIRLMYCYPELFTDELITVMKETPKVCRYLDLPLQHAHDKVLAEMNRRGTIREAEGLIHKLRQEIPDIRLRTTMITGFPGETEEEFQAVVEFAKKIRFDRLGAFAYSQEESTPAAQREDQVPEEIRQQRRDQLMELQHDIAYEQQQRWVGQTLKVLIEEALPDQRWVGRSEGDAPEIDGVVYVDSPGELEIGDFVLVKITRADSYDLMGEVVQ.

An MTTase N-terminal domain is found at 6-121 (KKVAVVTLGC…ILETLEEAEK (116 aa)). [4Fe-4S] cluster contacts are provided by Cys-15, Cys-50, Cys-84, Cys-159, Cys-163, and Cys-166. Positions 145–375 (LSPKQYAYVK…MELQHDIAYE (231 aa)) constitute a Radical SAM core domain. A TRAM domain is found at 378-445 (QRWVGQTLKV…SYDLMGEVVQ (68 aa)).

This sequence belongs to the methylthiotransferase family. RimO subfamily. The cofactor is [4Fe-4S] cluster.

It is found in the cytoplasm. The enzyme catalyses L-aspartate(89)-[ribosomal protein uS12]-hydrogen + (sulfur carrier)-SH + AH2 + 2 S-adenosyl-L-methionine = 3-methylsulfanyl-L-aspartate(89)-[ribosomal protein uS12]-hydrogen + (sulfur carrier)-H + 5'-deoxyadenosine + L-methionine + A + S-adenosyl-L-homocysteine + 2 H(+). In terms of biological role, catalyzes the methylthiolation of an aspartic acid residue of ribosomal protein uS12. The protein is Ribosomal protein uS12 methylthiotransferase RimO of Desulfitobacterium hafniense (strain Y51).